We begin with the raw amino-acid sequence, 515 residues long: Galactose-1-phosphate uridylyltransferase (515 aa).

Belongs to the galactose-1-phosphate uridylyltransferase type 2 family.

The protein resides in the cytoplasm. It catalyses the reaction alpha-D-galactose 1-phosphate + UDP-alpha-D-glucose = alpha-D-glucose 1-phosphate + UDP-alpha-D-galactose. Its pathway is carbohydrate metabolism; galactose metabolism. Transfers the UMP unit from UDP-glucose (UDP-Glc) to Gal1P. Can also transfer the UMP unit to GlcNAc1P and GalNAc1P. Involved in the general galactose metabolism, and also involved in the lacto-N-biose I/galacto-N-biose (LNB/GNB) degradation pathway, which is important for host intestinal colonization by bifidobacteria. The chain is Galactose-1-phosphate uridylyltransferase from Bifidobacterium longum subsp. longum (strain ATCC 15707 / DSM 20219 / JCM 1217 / NCTC 11818 / E194b).